The primary structure comprises 681 residues: Heat shock 70 kDa protein (681 aa).

A compositionally biased stretch (gly residues) spans 655-665; the sequence is NFPGGMPGAGM. The tract at residues 655 to 681 is disordered; sequence NFPGGMPGAGMPGNAPAGSGPTVEEVD. Residues 666–675 show a composition bias toward low complexity; the sequence is PGNAPAGSGP.

It belongs to the heat shock protein 70 family.

The sequence is that of Heat shock 70 kDa protein from Plasmodium falciparum.